Reading from the N-terminus, the 411-residue chain is Tyrosine--tRNA ligase (411 aa).

A 'HIGH' region motif is present at residues 50–59 (PTRPDLHLGH). The short motif at 236 to 240 (KMSKS) is the 'KMSKS' region element. Lys239 contacts ATP. The region spanning 345–409 (VSMAKLVVLA…GKDKFARLVL (65 aa)) is the S4 RNA-binding domain.

The protein belongs to the class-I aminoacyl-tRNA synthetase family. TyrS type 2 subfamily. As to quaternary structure, homodimer.

The protein resides in the cytoplasm. The catalysed reaction is tRNA(Tyr) + L-tyrosine + ATP = L-tyrosyl-tRNA(Tyr) + AMP + diphosphate + H(+). In terms of biological role, catalyzes the attachment of tyrosine to tRNA(Tyr) in a two-step reaction: tyrosine is first activated by ATP to form Tyr-AMP and then transferred to the acceptor end of tRNA(Tyr). The chain is Tyrosine--tRNA ligase from Deinococcus radiodurans (strain ATCC 13939 / DSM 20539 / JCM 16871 / CCUG 27074 / LMG 4051 / NBRC 15346 / NCIMB 9279 / VKM B-1422 / R1).